A 537-amino-acid chain; its full sequence is 6-phosphogluconate dehydrogenase, decarboxylating 2, chloroplastic (537 aa).

Residues 1-44 (MRSEVPSSTSPSFLSPPFIHLPLLSLSSPTPLPHSSSSTFSLFS) constitute a chloroplast transit peptide. NADP(+) is bound by residues 55–60 (GLAVMG), 78–80 (NRT), 122–124 (VKA), and asparagine 150. Substrate contacts are provided by residues asparagine 150 and 176–178 (SGG). Lysine 230 acts as the Proton acceptor in catalysis. 233-234 (HN) serves as a coordination point for substrate. The active-site Proton donor is the glutamate 237. Residues tyrosine 238, lysine 308, arginine 335, arginine 500, and histidine 506 each coordinate substrate.

It belongs to the 6-phosphogluconate dehydrogenase family. Homodimer.

Its subcellular location is the plastid. The protein localises to the chloroplast. The enzyme catalyses 6-phospho-D-gluconate + NADP(+) = D-ribulose 5-phosphate + CO2 + NADPH. It functions in the pathway carbohydrate degradation; pentose phosphate pathway; D-ribulose 5-phosphate from D-glucose 6-phosphate (oxidative stage): step 3/3. Catalyzes the oxidative decarboxylation of 6-phosphogluconate to ribulose 5-phosphate and CO(2), with concomitant reduction of NADP to NADPH. In Spinacia oleracea (Spinach), this protein is 6-phosphogluconate dehydrogenase, decarboxylating 2, chloroplastic.